A 545-amino-acid polypeptide reads, in one-letter code: Probable bifunctional tRNA threonylcarbamoyladenosine biosynthesis protein (545 aa).

The kae1 stretch occupies residues 1–329 (MDTSKDLICI…YRSDMVEVNW (329 aa)). Residues His-112, His-116, and Tyr-133 each coordinate Fe cation. L-threonylcarbamoyladenylate contacts are provided by residues 133–137 (YVSGG), Asp-165, Gly-178, Glu-182, and Asn-262. Asp-290 contacts Fe cation. One can recognise a Protein kinase domain in the interval 344-545 (IIPEHLIGKG…KEVEKRARYL (202 aa)). ATP is bound by residues 350–358 (IGKGAEADI) and Lys-371. Asp-463 acts as the Proton acceptor; for kinase activity in catalysis.

This sequence in the N-terminal section; belongs to the KAE1 / TsaD family. It in the C-terminal section; belongs to the protein kinase superfamily. Tyr protein kinase family. BUD32 subfamily. As to quaternary structure, component of the KEOPS complex that consists of Kae1, Bud32, Cgi121 and Pcc1; the whole complex dimerizes. Fe(2+) serves as cofactor.

It is found in the cytoplasm. It catalyses the reaction L-seryl-[protein] + ATP = O-phospho-L-seryl-[protein] + ADP + H(+). The enzyme catalyses L-threonyl-[protein] + ATP = O-phospho-L-threonyl-[protein] + ADP + H(+). It carries out the reaction L-threonylcarbamoyladenylate + adenosine(37) in tRNA = N(6)-L-threonylcarbamoyladenosine(37) in tRNA + AMP + H(+). In terms of biological role, required for the formation of a threonylcarbamoyl group on adenosine at position 37 (t(6)A37) in tRNAs that read codons beginning with adenine. Is a component of the KEOPS complex that is probably involved in the transfer of the threonylcarbamoyl moiety of threonylcarbamoyl-AMP (TC-AMP) to the N6 group of A37. The Kae1 domain likely plays a direct catalytic role in this reaction. The Bud32 domain probably displays kinase activity that regulates Kae1 function. This is Probable bifunctional tRNA threonylcarbamoyladenosine biosynthesis protein from Methanococcus maripaludis (strain C5 / ATCC BAA-1333).